Consider the following 41-residue polypeptide: Large ribosomal subunit protein bL36 (41 aa).

It belongs to the bacterial ribosomal protein bL36 family.

This chain is Large ribosomal subunit protein bL36, found in Zymomonas mobilis subsp. mobilis (strain ATCC 31821 / ZM4 / CP4).